The primary structure comprises 612 residues: DNA damage checkpoint protein 1 (612 aa).

Ser-436 bears the Phosphoserine mark. Residues 576 to 612 are disordered; that stretch reads GLLNSQNDTSNHKKQDNKEMEDGLGLTQVEKPRGIFD. A compositionally biased stretch (basic and acidic residues) spans 585 to 596; it reads SNHKKQDNKEME.

This sequence belongs to the DDC1 family. In terms of assembly, component of the checkpoint clamp complex composed of DDC1, MEC3 and RAD17. The interaction with MEC3 is performed in a RAD17-dependent manner. The checkpoint clamp complex loads onto DNA in an ATP-dependent manner through its interaction with the RFC-RAD4 checkpoint clamp loader complex. Interacts with the DNA polymerase zeta subunit REV7 and DPB11. Phosphorylated during cell cycle S-phase and in response to DNA damage. This phosphorylation is MEC14 dependent. Also hosphorylated by CDC28.

The protein resides in the cytoplasm. The protein localises to the nucleus. Its function is as follows. Component of the checkpoint clamp complex involved in the surveillance mechanism that allows the DNA repair pathways to act to restore the integrity of the DNA prior to DNA synthesis or separation of the replicated chromosomes. Associates with sites of DNA damage and modulates the MEC1 signaling pathway and the activation of RAD53 in response to DNA damage at phase G1. The complex also physically regulates DNA polymerase zeta-dependent mutagenesis by controlling the access of polymerase zeta to damaged DNA. The polypeptide is DNA damage checkpoint protein 1 (DDC1) (Saccharomyces cerevisiae (strain ATCC 204508 / S288c) (Baker's yeast)).